Consider the following 135-residue polypeptide: Large ribosomal subunit protein uL16 (135 aa).

The protein belongs to the universal ribosomal protein uL16 family. Part of the 50S ribosomal subunit.

Its function is as follows. Binds 23S rRNA and is also seen to make contacts with the A and possibly P site tRNAs. This chain is Large ribosomal subunit protein uL16, found in Desulfatibacillum aliphaticivorans.